A 281-amino-acid polypeptide reads, in one-letter code: Tetraspanin-5 (281 aa).

Residues 1–7 (MNRMSNT) are Cytoplasmic-facing. Residues 8 to 28 (VIGFLNILTLISSIVLLGSAL) traverse the membrane as a helical segment. Over 29 to 44 (WMGRSKTTCEHFLQKP) the chain is Extracellular. The helical transmembrane segment at 45 to 65 (LLILGLAILILSVAGLVGACC) threads the bilayer. At 66 to 74 (DVAWVLWVY) the chain is on the cytoplasmic side. The chain crosses the membrane as a helical span at residues 75–95 (LFFMVFIIVALMGLTLFGFIV). The Extracellular portion of the chain corresponds to 96–221 (TSHSGGVVVD…TVRRDWHKLS (126 aa)). Residues 222-242 (LVNVIVVIFLIAVYCVGCCAF) traverse the membrane as a helical segment. Over 243–281 (KNAKRPQHYGFPYGRYGMSKSRPGWEQSWSRWWHGRDRY) the chain is Cytoplasmic.

Belongs to the tetraspanin (TM4SF) family.

Its subcellular location is the membrane. May be involved in the regulation of cell differentiation. The protein is Tetraspanin-5 (TET5) of Arabidopsis thaliana (Mouse-ear cress).